Here is a 508-residue protein sequence, read N- to C-terminus: MQRLLTPVRQVLRVKRAMQEASFMPPLLPPAAHQRFSTVPAVPVAKADTWPKDVGILALEVYFPAQYVDQTDLEKFDNVEAGRYTVGLGQTHMGFCSVQEDINSLCLTVVQRLMERTQLPWDSVGWLEVGTETIIDKSKSVKTVLMELFQDSGNTDIEGIDTTNACYGGTASLFNAANWVESSAWDGRYAVVVCGDIAVYPRGNSRPTGGAGAVAMLVGPEAPLALERGLRGTHMENAYDFYKPNATSEYPLVDGKLSIQCYLRALDRCYTLYRQKIEKQWKQAGIERHFTLDDLQFMIFHTPFCKLVQKSLARLMFSDFLLADSDTQSSLYKGLEAFRGQKLEDTYANKDIEKAFQKASLDLFNKKTKPSLYLSLHNGNMYTSSLYGCLASLLSQCSAQDLAGSRIGAFSYGSGLAASFYSLRVSQDASPGSPLEKLVSSVSDLPERLASRKRVSPEEFTEIMNQREQYYHKVNFTPPGDPNSLFPGTWYLERVDELYRRKYARHLV.

The transit peptide at 1–37 (MQRLLTPVRQVLRVKRAMQEASFMPPLLPPAAHQRFS) directs the protein to the mitochondrion. At Lys-52 the chain carries N6-succinyllysine. (3S)-3-hydroxy-3-methylglutaryl-CoA-binding residues include Glu-80 and Ala-81. Glu-132 (proton donor/acceptor) is an active-site residue. (3S)-3-hydroxy-3-methylglutaryl-CoA is bound by residues Cys-166, Asn-204, and Thr-208. The active-site Acyl-thioester intermediate is the Cys-166. Lys-243 is modified (N6-acetyllysine). An N6-acetyllysine; alternate modification is found at Lys-256. Lys-256 is modified (N6-succinyllysine; alternate). 2 residues coordinate (3S)-3-hydroxy-3-methylglutaryl-CoA: Ser-258 and His-301. His-301 serves as the catalytic Proton donor/acceptor. Position 306 is an N6-acetyllysine (Lys-306). Lys-310 contributes to the (3S)-3-hydroxy-3-methylglutaryl-CoA binding site. Lys-310 carries the N6-acetyllysine; alternate modification. Lys-310 carries the post-translational modification N6-succinyllysine; alternate. Lys-333 is subject to N6-succinyllysine. Lys-342, Lys-350, Lys-354, and Lys-358 each carry N6-acetyllysine; alternate. 4 positions are modified to N6-succinyllysine; alternate: Lys-342, Lys-350, Lys-354, and Lys-358. (3S)-3-hydroxy-3-methylglutaryl-CoA-binding residues include Asn-380 and Ser-414. Ser-433 bears the Phosphoserine mark. Lys-437 carries the post-translational modification N6-acetyllysine. A phosphoserine mark is found at Ser-440 and Ser-456. Lys-473 carries the N6-acetyllysine; alternate modification. An N6-succinyllysine; alternate modification is found at Lys-473.

This sequence belongs to the thiolase-like superfamily. HMG-CoA synthase family. As to quaternary structure, homodimer. Post-translationally, succinylated. Desuccinylated by SIRT5. Succinylation, at least at Lys-310, inhibits the enzymatic activity.

The protein localises to the mitochondrion. It carries out the reaction acetoacetyl-CoA + acetyl-CoA + H2O = (3S)-3-hydroxy-3-methylglutaryl-CoA + CoA + H(+). The protein operates within metabolic intermediate biosynthesis; (R)-mevalonate biosynthesis; (R)-mevalonate from acetyl-CoA: step 2/3. In terms of biological role, catalyzes the first irreversible step in ketogenesis, condensing acetyl-CoA to acetoacetyl-CoA to form HMG-CoA, which is converted by HMG-CoA reductase (HMGCR) into mevalonate. The protein is Hydroxymethylglutaryl-CoA synthase, mitochondrial (HMGCS2) of Sus scrofa (Pig).